A 309-amino-acid chain; its full sequence is Peptide methionine sulfoxide reductase MsrA/MsrB (309 aa).

The interval 1-153 (MIYLAGGCFW…PNGYCHIDIN (153 aa)) is peptide methionine sulfoxide reductase A. C8 is a catalytic residue. Residues 170–293 (ATEIKEKLSA…NSLSITFIPK (124 aa)) form the MsrB domain. C282 functions as the Nucleophile in the catalytic mechanism.

In the N-terminal section; belongs to the MsrA Met sulfoxide reductase family. The protein in the C-terminal section; belongs to the MsrB Met sulfoxide reductase family.

The enzyme catalyses L-methionyl-[protein] + [thioredoxin]-disulfide + H2O = L-methionyl-(S)-S-oxide-[protein] + [thioredoxin]-dithiol. It catalyses the reaction [thioredoxin]-disulfide + L-methionine + H2O = L-methionine (S)-S-oxide + [thioredoxin]-dithiol. The catalysed reaction is L-methionyl-[protein] + [thioredoxin]-disulfide + H2O = L-methionyl-(R)-S-oxide-[protein] + [thioredoxin]-dithiol. Has an important function as a repair enzyme for proteins that have been inactivated by oxidation. Catalyzes the reversible oxidation-reduction of methionine sulfoxide in proteins to methionine. This Streptococcus pyogenes serotype M1 protein is Peptide methionine sulfoxide reductase MsrA/MsrB (msrAB).